A 198-amino-acid polypeptide reads, in one-letter code: uncharacterized protein (198 aa).

The tract at residues 166 to 198 (GYEPDEKARKKRERVKRSEVEDQLKINVKPTRR) is disordered.

This is an uncharacterized protein from Coxiella burnetii (strain RSA 493 / Nine Mile phase I).